A 512-amino-acid chain; its full sequence is Cytochrome P450 1A1 (512 aa).

Residues 29–40 (SRPRVPKGLKNP) form a mitochondrial targeting signal region. Serine 67 is a glycosylation site (O-linked (GlcNAc) serine). Phenylalanine 224 provides a ligand contact to substrate. Cysteine 457 serves as a coordination point for heme.

The protein belongs to the cytochrome P450 family. As to quaternary structure, interacts with cytosolic chaperones HSP70 and HSP90; this interaction is required for initial targeting to mitochondria. Interacts (via mitochondrial targeting signal) with TOMM40 (via N-terminus); this interaction is required for translocation across the mitochondrial outer membrane. Heme is required as a cofactor.

Its subcellular location is the endoplasmic reticulum membrane. It is found in the mitochondrion inner membrane. The protein resides in the microsome membrane. The protein localises to the cytoplasm. The catalysed reaction is an organic molecule + reduced [NADPH--hemoprotein reductase] + O2 = an alcohol + oxidized [NADPH--hemoprotein reductase] + H2O + H(+). It catalyses the reaction estrone + reduced [NADPH--hemoprotein reductase] + O2 = 2-hydroxyestrone + oxidized [NADPH--hemoprotein reductase] + H2O + H(+). The enzyme catalyses estrone + reduced [NADPH--hemoprotein reductase] + O2 = 4-hydroxyestrone + oxidized [NADPH--hemoprotein reductase] + H2O + H(+). It carries out the reaction estrone + reduced [NADPH--hemoprotein reductase] + O2 = 6alpha-hydroxyestrone + oxidized [NADPH--hemoprotein reductase] + H2O + H(+). The catalysed reaction is estrone + reduced [NADPH--hemoprotein reductase] + O2 = 15alpha-hydroxyestrone + oxidized [NADPH--hemoprotein reductase] + H2O + H(+). It catalyses the reaction estrone + reduced [NADPH--hemoprotein reductase] + O2 = 16alpha-hydroxyestrone + oxidized [NADPH--hemoprotein reductase] + H2O + H(+). The enzyme catalyses 17beta-estradiol + reduced [NADPH--hemoprotein reductase] + O2 = 2-hydroxy-17beta-estradiol + oxidized [NADPH--hemoprotein reductase] + H2O + H(+). It carries out the reaction 17beta-estradiol + reduced [NADPH--hemoprotein reductase] + O2 = 4-hydroxy-17beta-estradiol + oxidized [NADPH--hemoprotein reductase] + H2O + H(+). The catalysed reaction is 17beta-estradiol + reduced [NADPH--hemoprotein reductase] + O2 = 6alpha-hydroxy-17beta-estradiol + oxidized [NADPH--hemoprotein reductase] + H2O + H(+). It catalyses the reaction 17beta-estradiol + reduced [NADPH--hemoprotein reductase] + O2 = 7alpha-hydroxy-17beta-estradiol + oxidized [NADPH--hemoprotein reductase] + H2O + H(+). The enzyme catalyses 17beta-estradiol + reduced [NADPH--hemoprotein reductase] + O2 = 15alpha-hydroxy-17beta-estradiol + oxidized [NADPH--hemoprotein reductase] + H2O + H(+). It carries out the reaction (5Z,8Z,11Z)-eicosatrienoate + reduced [NADPH--hemoprotein reductase] + O2 = 19-hydroxy-(5Z,8Z,11Z)-eicosatrienoate + oxidized [NADPH--hemoprotein reductase] + H2O + H(+). The catalysed reaction is (5Z,8Z,11Z,14Z)-eicosatetraenoate + reduced [NADPH--hemoprotein reductase] + O2 = 16-hydroxy-(5Z,8Z,11Z,14Z)-eicosatetraenoate + oxidized [NADPH--hemoprotein reductase] + H2O + H(+). It catalyses the reaction (5Z,8Z,11Z,14Z)-eicosatetraenoate + reduced [NADPH--hemoprotein reductase] + O2 = 17-hydroxy-(5Z,8Z,11Z,14Z)-eicosatetraenoate + oxidized [NADPH--hemoprotein reductase] + H2O + H(+). The enzyme catalyses (5Z,8Z,11Z,14Z)-eicosatetraenoate + reduced [NADPH--hemoprotein reductase] + O2 = 18-hydroxy-(5Z,8Z,11Z,14Z)-eicosatetraenoate + oxidized [NADPH--hemoprotein reductase] + H2O + H(+). It carries out the reaction (5Z,8Z,11Z,14Z)-eicosatetraenoate + reduced [NADPH--hemoprotein reductase] + O2 = 19-hydroxy-(5Z,8Z,11Z,14Z)-eicosatetraenoate + oxidized [NADPH--hemoprotein reductase] + H2O + H(+). The catalysed reaction is (5Z,8Z,11Z,14Z,17Z)-eicosapentaenoate + reduced [NADPH--hemoprotein reductase] + O2 = 19-hydroxy-(5Z,8Z,11Z,14Z,17Z)-eicosapentaenoate + oxidized [NADPH--hemoprotein reductase] + H2O + H(+). It catalyses the reaction (5Z,8Z,11Z,14Z)-eicosatetraenoate + reduced [NADPH--hemoprotein reductase] + O2 = (8R,9S)-epoxy-(5Z,11Z,14Z)-eicosatrienoate + oxidized [NADPH--hemoprotein reductase] + H2O + H(+). The enzyme catalyses (5Z,8Z,11Z,14Z)-eicosatetraenoate + reduced [NADPH--hemoprotein reductase] + O2 = (11R,12S)-epoxy-(5Z,8Z,14Z)-eicosatrienoate + oxidized [NADPH--hemoprotein reductase] + H2O + H(+). It carries out the reaction (5Z,8Z,11Z,14Z)-eicosatetraenoate + reduced [NADPH--hemoprotein reductase] + O2 = (14S,15R)-epoxy-(5Z,8Z,11Z)-eicosatrienoate + oxidized [NADPH--hemoprotein reductase] + H2O + H(+). The catalysed reaction is (5Z,8Z,11Z,14Z)-eicosatetraenoate + reduced [NADPH--hemoprotein reductase] + O2 = (14R,15S)-epoxy-(5Z,8Z,11Z)-eicosatrienoate + oxidized [NADPH--hemoprotein reductase] + H2O + H(+). It catalyses the reaction (5Z,8Z,11Z,14Z,17Z)-eicosapentaenoate + reduced [NADPH--hemoprotein reductase] + O2 = (17R,18S)-epoxy-(5Z,8Z,11Z,14Z)-eicosatetraenoate + oxidized [NADPH--hemoprotein reductase] + H2O + H(+). The enzyme catalyses (4Z,7Z,10Z,13Z,16Z,19Z)-docosahexaenoate + reduced [NADPH--hemoprotein reductase] + O2 = (19S,20R)-epoxy-(4Z,7Z,10Z,13Z,16Z)-docosapentaenoate + oxidized [NADPH--hemoprotein reductase] + H2O + H(+). It carries out the reaction (4Z,7Z,10Z,13Z,16Z,19Z)-docosahexaenoate + reduced [NADPH--hemoprotein reductase] + O2 = (19R,20S)-epoxy-(4Z,7Z,10Z,13Z,16Z)-docosapentaenoate + oxidized [NADPH--hemoprotein reductase] + H2O + H(+). The catalysed reaction is all-trans-retinol + reduced [NADPH--hemoprotein reductase] + O2 = all-trans-retinal + oxidized [NADPH--hemoprotein reductase] + 2 H2O + H(+). It catalyses the reaction all-trans-retinal + reduced [NADPH--hemoprotein reductase] + O2 = all-trans-retinoate + oxidized [NADPH--hemoprotein reductase] + H2O + 2 H(+). The enzyme catalyses (13S)-hydroperoxy-(9Z,11E)-octadecadienoate = 13-oxo-(9Z,11E)-octadecadienoate + H2O. It carries out the reaction (12S)-hydroperoxy-(5Z,8Z,10E,14Z)-eicosatetraenoate = 12-oxo-(5Z,8Z,10E,14Z)-eicosatetraenoate + H2O. The catalysed reaction is (15S)-hydroperoxy-(5Z,8Z,11Z,13E)-eicosatetraenoate = 15-oxo-(5Z,8Z,11Z,13E)-eicosatetraenoate + H2O. It catalyses the reaction (5S)-hydroperoxy-(6E,8Z,11Z,14Z)-eicosatetraenoate = 5-oxo-(6E,8Z,11Z,14Z)-eicosatetraenoate + H2O. It participates in steroid hormone biosynthesis. Its pathway is lipid metabolism; fatty acid metabolism. It functions in the pathway cofactor metabolism; retinol metabolism. In terms of biological role, a cytochrome P450 monooxygenase involved in the metabolism of various endogenous substrates, including fatty acids, steroid hormones and vitamins. Mechanistically, uses molecular oxygen inserting one oxygen atom into a substrate, and reducing the second into a water molecule, with two electrons provided by NADPH via cytochrome P450 reductase (CPR; NADPH-ferrihemoprotein reductase). Catalyzes the hydroxylation of carbon-hydrogen bonds. Exhibits high catalytic activity for the formation of hydroxyestrogens from estrone (E1) and 17beta-estradiol (E2), namely 2-hydroxy E1 and E2, as well as D-ring hydroxylated E1 and E2 at the C15alpha and C16alpha positions. Displays different regioselectivities for polyunsaturated fatty acids (PUFA) hydroxylation. Catalyzes the epoxidation of double bonds of certain PUFA. Converts arachidonic acid toward epoxyeicosatrienoic acid (EET) regioisomers, 8,9-, 11,12-, and 14,15-EET, that function as lipid mediators in the vascular system. Displays an absolute stereoselectivity in the epoxidation of eicosapentaenoic acid (EPA) producing the 17(R),18(S) enantiomer. May play an important role in all-trans retinoic acid biosynthesis in extrahepatic tissues. Catalyzes two successive oxidative transformation of all-trans retinol to all-trans retinal and then to the active form all-trans retinoic acid. May also participate in eicosanoids metabolism by converting hydroperoxide species into oxo metabolites (lipoxygenase-like reaction, NADPH-independent). This is Cytochrome P450 1A1 (CYP1A1) from Macaca mulatta (Rhesus macaque).